Reading from the N-terminus, the 205-residue chain is Guanylate kinase (205 aa).

Residues 5–183 (GLLIVFSGPS…AAERVKKIIE (179 aa)) enclose the Guanylate kinase-like domain. 12 to 19 (GPSGVGKG) lines the ATP pocket.

Belongs to the guanylate kinase family.

It localises to the cytoplasm. It catalyses the reaction GMP + ATP = GDP + ADP. Functionally, essential for recycling GMP and indirectly, cGMP. The polypeptide is Guanylate kinase (gmk) (Lactococcus lactis subsp. lactis (strain IL1403) (Streptococcus lactis)).